Here is a 254-residue protein sequence, read N- to C-terminus: Alcohol dehydrogenase 2 (254 aa).

Residue 10–33 participates in NAD(+) binding; sequence FVAGLGGIGFDTSREIVKRGPKNL. Substrate is bound at residue Ser138. Tyr151 serves as the catalytic Proton acceptor.

Belongs to the short-chain dehydrogenases/reductases (SDR) family. Homodimer.

The enzyme catalyses a primary alcohol + NAD(+) = an aldehyde + NADH + H(+). It catalyses the reaction a secondary alcohol + NAD(+) = a ketone + NADH + H(+). The chain is Alcohol dehydrogenase 2 (Adh2) from Drosophila mojavensis (Fruit fly).